We begin with the raw amino-acid sequence, 89 residues long: Small ribosomal subunit protein uS15 (89 aa).

This sequence belongs to the universal ribosomal protein uS15 family. In terms of assembly, part of the 30S ribosomal subunit. Forms a bridge to the 50S subunit in the 70S ribosome, contacting the 23S rRNA.

Functionally, one of the primary rRNA binding proteins, it binds directly to 16S rRNA where it helps nucleate assembly of the platform of the 30S subunit by binding and bridging several RNA helices of the 16S rRNA. Forms an intersubunit bridge (bridge B4) with the 23S rRNA of the 50S subunit in the ribosome. The protein is Small ribosomal subunit protein uS15 of Baumannia cicadellinicola subsp. Homalodisca coagulata.